The following is a 479-amino-acid chain: Glutamyl-tRNA(Gln) amidotransferase subunit A (479 aa).

Catalysis depends on charge relay system residues lysine 74 and serine 149. Serine 173 serves as the catalytic Acyl-ester intermediate.

The protein belongs to the amidase family. GatA subfamily. As to quaternary structure, heterotrimer of A, B and C subunits.

It carries out the reaction L-glutamyl-tRNA(Gln) + L-glutamine + ATP + H2O = L-glutaminyl-tRNA(Gln) + L-glutamate + ADP + phosphate + H(+). Allows the formation of correctly charged Gln-tRNA(Gln) through the transamidation of misacylated Glu-tRNA(Gln) in organisms which lack glutaminyl-tRNA synthetase. The reaction takes place in the presence of glutamine and ATP through an activated gamma-phospho-Glu-tRNA(Gln). The chain is Glutamyl-tRNA(Gln) amidotransferase subunit A from Cenarchaeum symbiosum (strain A).